Consider the following 877-residue polypeptide: Phosphoenolpyruvate carboxylase (877 aa).

Catalysis depends on residues H138 and K544.

This sequence belongs to the PEPCase type 1 family. It depends on Mg(2+) as a cofactor.

It catalyses the reaction oxaloacetate + phosphate = phosphoenolpyruvate + hydrogencarbonate. Its function is as follows. Forms oxaloacetate, a four-carbon dicarboxylic acid source for the tricarboxylic acid cycle. The chain is Phosphoenolpyruvate carboxylase from Vibrio parahaemolyticus serotype O3:K6 (strain RIMD 2210633).